The sequence spans 369 residues: Probable dual-specificity RNA methyltransferase RlmN (369 aa).

The active-site Proton acceptor is the glutamate 108. The region spanning 114-351 is the Radical SAM core domain; the sequence is YPDRATLCIS…LAQGVSCTVR (238 aa). The cysteines at positions 121 and 362 are disulfide-linked. [4Fe-4S] cluster contacts are provided by cysteine 128, cysteine 132, and cysteine 135. S-adenosyl-L-methionine contacts are provided by residues 183 to 184, serine 217, 240 to 242, and asparagine 319; these read GE and SLH. The active-site S-methylcysteine intermediate is cysteine 362.

This sequence belongs to the radical SAM superfamily. RlmN family. Requires [4Fe-4S] cluster as cofactor.

It localises to the cytoplasm. The enzyme catalyses adenosine(2503) in 23S rRNA + 2 reduced [2Fe-2S]-[ferredoxin] + 2 S-adenosyl-L-methionine = 2-methyladenosine(2503) in 23S rRNA + 5'-deoxyadenosine + L-methionine + 2 oxidized [2Fe-2S]-[ferredoxin] + S-adenosyl-L-homocysteine. The catalysed reaction is adenosine(37) in tRNA + 2 reduced [2Fe-2S]-[ferredoxin] + 2 S-adenosyl-L-methionine = 2-methyladenosine(37) in tRNA + 5'-deoxyadenosine + L-methionine + 2 oxidized [2Fe-2S]-[ferredoxin] + S-adenosyl-L-homocysteine. Its function is as follows. Specifically methylates position 2 of adenine 2503 in 23S rRNA and position 2 of adenine 37 in tRNAs. The polypeptide is Probable dual-specificity RNA methyltransferase RlmN (Rhodococcus jostii (strain RHA1)).